Consider the following 422-residue polypeptide: Metallocarboxypeptidase A (422 aa).

An N-terminal signal peptide occupies residues 1-17 (MRSVLSLALLAANVVTA). Residues 18–112 (AVVSPFDYSG…FEAYSAGYAP (95 aa)) constitute a propeptide, activation peptide. The Peptidase M14 domain occupies 119–419 (SYHSYQDHIS…AGTVAMLKAV (301 aa)). Zn(2+)-binding residues include H179 and E182. Residues 179 to 182 (HARE), R237, and 254 to 255 (NR) contribute to the substrate site. C248 and C271 form a disulfide bridge. H309 contacts Zn(2+). Residue 310-311 (SY) participates in substrate binding. E385 acts as the Proton donor/acceptor in catalysis.

This sequence belongs to the peptidase M14 family. The cofactor is Zn(2+).

The protein localises to the secreted. Functionally, extracellular metalloprotease that contributes to pathogenicity. This is Metallocarboxypeptidase A (MCPA) from Trichophyton tonsurans (Scalp ringworm fungus).